A 564-amino-acid chain; its full sequence is MAGVCDAAAPGEGGGGGADGPERTGRGEAEQPGGGGHGPAPQHTETLGFYESDRRREKRRGRAELSLLRFLSAELTRGYFLEHNEAKYTERRERVYTCMRIPRELEKLMFFGIFLCLDAFLYVFTLLPLRVFLALFRLLTLPCYGLRDRRLLQPAQVCDILKGVILVICYFMMHYVDYSMMYHLIRGQSVIKLYIIYNMLEVADRLFSSFGQDILDALYWTATEPKERKRAHIGVIPHFFMAVLYVFLHAILIMVQATTLNVAFNSHNKSLLTIMMSNNFVEIKGSVFKKFEKNNLFQMSNSDIKERFTNYVLLLIVCLRNMEQFSWNPDHLWVLFPDVCMVIASEIAVDIVKHAFITKFNDITADVYSEYRASLAFDLVSSRQKNAYTDYSDSVARRMGFIPLPLAVLLIRVVTSSIKVQGILSYACVILFYFGLISLKILNSIVLLGKSCQYVKEAKMEEKLFNPPPASTPGKPSSKSQSKGKPSQGLSTEENLSASVTSQPGHQKENVIPLLVTSNSDQFLTTPDGDEKDITQENSELKHRSSKKDLLEIDRFTICGNRID.

Residues 1–10 show a composition bias toward low complexity; it reads MAGVCDAAAP. The segment at 1–55 is disordered; that stretch reads MAGVCDAAAPGEGGGGGADGPERTGRGEAEQPGGGGHGPAPQHTETLGFYESDRR. Position 2 is an N-acetylalanine (alanine 2). Residues 20 to 29 show a composition bias toward basic and acidic residues; that stretch reads GPERTGRGEA. A run of 6 helical transmembrane segments spans residues 108 to 128, 154 to 176, 233 to 253, 332 to 352, 400 to 420, and 429 to 449; these read LMFF…TLLP, PAQV…MHYV, IGVI…AILI, LWVL…VDIV, GFIP…SIKV, and VILF…VLLG. The tract at residues 464-546 is disordered; sequence LFNPPPASTP…ENSELKHRSS (83 aa). Residues 473–489 are compositionally biased toward low complexity; that stretch reads PGKPSSKSQSKGKPSQG. 2 stretches are compositionally biased toward polar residues: residues 490-505 and 516-525; these read LSTE…SQPG and VTSNSDQFLT. Serine 520 is subject to Phosphoserine. Residue threonine 526 is modified to Phosphothreonine. Over residues 532–546 the composition is skewed to basic and acidic residues; that stretch reads KDITQENSELKHRSS.

The protein belongs to the TAPT1 family. As to expression, ubiquitous. Expressed throughout embryo.

The protein localises to the cytoplasm. It localises to the cytoskeleton. The protein resides in the microtubule organizing center. It is found in the centrosome. Its subcellular location is the cilium basal body. The protein localises to the membrane. Functionally, plays a role in primary cilia formation. May act as a downstream effector of HOXC8 possibly by transducing or transmitting extracellular information required for axial skeletal patterning during development. May be involved in cartilage and bone development. May play a role in the differentiation of cranial neural crest cells. This chain is Transmembrane anterior posterior transformation protein 1 (Tapt1), found in Mus musculus (Mouse).